We begin with the raw amino-acid sequence, 160 residues long: Small ribosomal subunit protein uS7 (160 aa).

Belongs to the universal ribosomal protein uS7 family. In terms of assembly, part of the 30S ribosomal subunit. Contacts proteins S9 and S11.

Functionally, one of the primary rRNA binding proteins, it binds directly to 16S rRNA where it nucleates assembly of the head domain of the 30S subunit. Is located at the subunit interface close to the decoding center, probably blocks exit of the E-site tRNA. The sequence is that of Small ribosomal subunit protein uS7 from Rickettsia akari (strain Hartford).